The primary structure comprises 409 residues: MPVNIPPLLPEQLLPIPGLSLGTAEASIKRPGRKDILVITLAENTRVAGVFTRNRFCAAPVTVARSHLTGSLPIRALVINTGNANAGTGQSGIDHAHATCASLARLIGCQTQQVLPFSTGVIMEPLPVEKIITHLPQALANLAPDNWFAAAQAIMTTDIVPKGVSRQIQINGTTVTITGIAKGSGMIHPNMATMLGYIATDAAVTQPLLDDLVRYATDRSFNCVTVDGDTSTNDALILMATGQAGNTPITVSTDPAFISLQAAITEVAALLAQMIVRDGEGATKFITVQVESGKTREECTKVAYAIAHSPLIKTACFASDPNLGRILAAIGYAGIEDLDVNLVQLYLGNILVAEHGGRAASYREEDGQRIMQAPEITIQVKLNRGNASTTVWTCDLSYDYVKINADYRS.

Substrate contacts are provided by Thr156, Lys182, Thr193, Glu280, Asn404, and Ser409. Residue Thr193 is the Nucleophile of the active site.

Belongs to the ArgJ family. Heterotetramer of two alpha and two beta chains.

It localises to the cytoplasm. The catalysed reaction is N(2)-acetyl-L-ornithine + L-glutamate = N-acetyl-L-glutamate + L-ornithine. The enzyme catalyses L-glutamate + acetyl-CoA = N-acetyl-L-glutamate + CoA + H(+). The protein operates within amino-acid biosynthesis; L-arginine biosynthesis; L-ornithine and N-acetyl-L-glutamate from L-glutamate and N(2)-acetyl-L-ornithine (cyclic): step 1/1. Its pathway is amino-acid biosynthesis; L-arginine biosynthesis; N(2)-acetyl-L-ornithine from L-glutamate: step 1/4. Its function is as follows. Catalyzes two activities which are involved in the cyclic version of arginine biosynthesis: the synthesis of N-acetylglutamate from glutamate and acetyl-CoA as the acetyl donor, and of ornithine by transacetylation between N(2)-acetylornithine and glutamate. In Nitrosomonas europaea (strain ATCC 19718 / CIP 103999 / KCTC 2705 / NBRC 14298), this protein is Arginine biosynthesis bifunctional protein ArgJ.